The primary structure comprises 497 residues: Probable cytosol aminopeptidase (497 aa).

Positions 263 and 268 each coordinate Mn(2+). The active site involves K275. Mn(2+)-binding residues include D286, D345, and E347. R349 is a catalytic residue.

This sequence belongs to the peptidase M17 family. It depends on Mn(2+) as a cofactor.

The protein resides in the cytoplasm. It catalyses the reaction Release of an N-terminal amino acid, Xaa-|-Yaa-, in which Xaa is preferably Leu, but may be other amino acids including Pro although not Arg or Lys, and Yaa may be Pro. Amino acid amides and methyl esters are also readily hydrolyzed, but rates on arylamides are exceedingly low.. It carries out the reaction Release of an N-terminal amino acid, preferentially leucine, but not glutamic or aspartic acids.. Functionally, presumably involved in the processing and regular turnover of intracellular proteins. Catalyzes the removal of unsubstituted N-terminal amino acids from various peptides. This Brucella suis biovar 1 (strain 1330) protein is Probable cytosol aminopeptidase.